The following is a 480-amino-acid chain: Phosphomethylpyrimidine synthase (480 aa).

Substrate is bound by residues asparagine 66, methionine 95, tyrosine 124, histidine 159, 179–181 (SRG), 220–223 (DGLR), and glutamate 259. Histidine 263 contributes to the Zn(2+) binding site. Residue tyrosine 286 coordinates substrate. Histidine 327 serves as a coordination point for Zn(2+). Positions 407, 410, and 415 each coordinate [4Fe-4S] cluster. Residues 426 to 480 (DGDMESIEADADDRTPLEDSSAAAVNRPPVGTHDGADIPGPDADMPADTEGSADD) form a disordered region. A compositionally biased stretch (acidic residues) spans 470 to 480 (MPADTEGSADD).

This sequence belongs to the ThiC family. [4Fe-4S] cluster is required as a cofactor.

It catalyses the reaction 5-amino-1-(5-phospho-beta-D-ribosyl)imidazole + S-adenosyl-L-methionine = 4-amino-2-methyl-5-(phosphooxymethyl)pyrimidine + CO + 5'-deoxyadenosine + formate + L-methionine + 3 H(+). It functions in the pathway cofactor biosynthesis; thiamine diphosphate biosynthesis. In terms of biological role, catalyzes the synthesis of the hydroxymethylpyrimidine phosphate (HMP-P) moiety of thiamine from aminoimidazole ribotide (AIR) in a radical S-adenosyl-L-methionine (SAM)-dependent reaction. This chain is Phosphomethylpyrimidine synthase, found in Haloarcula marismortui (strain ATCC 43049 / DSM 3752 / JCM 8966 / VKM B-1809) (Halobacterium marismortui).